The primary structure comprises 34 residues: Ornithine carbamoyltransferase, catabolic (34 aa).

The protein belongs to the aspartate/ornithine carbamoyltransferase superfamily. OTCase family. As to quaternary structure, probably nonameric or dodecameric.

The protein resides in the cytoplasm. It carries out the reaction carbamoyl phosphate + L-ornithine = L-citrulline + phosphate + H(+). It functions in the pathway amino-acid degradation; L-arginine degradation via ADI pathway; carbamoyl phosphate from L-arginine: step 2/2. The polypeptide is Ornithine carbamoyltransferase, catabolic (arcB) (Pseudomonas putida (Arthrobacter siderocapsulatus)).